A 156-amino-acid polypeptide reads, in one-letter code: ATP synthase subunit b (156 aa).

Residues 7–29 (LFAQMVVFLVLAWFTMKFVWPPL) form a helical membrane-spanning segment.

It belongs to the ATPase B chain family. In terms of assembly, F-type ATPases have 2 components, F(1) - the catalytic core - and F(0) - the membrane proton channel. F(1) has five subunits: alpha(3), beta(3), gamma(1), delta(1), epsilon(1). F(0) has three main subunits: a(1), b(2) and c(10-14). The alpha and beta chains form an alternating ring which encloses part of the gamma chain. F(1) is attached to F(0) by a central stalk formed by the gamma and epsilon chains, while a peripheral stalk is formed by the delta and b chains.

It is found in the cell inner membrane. Functionally, f(1)F(0) ATP synthase produces ATP from ADP in the presence of a proton or sodium gradient. F-type ATPases consist of two structural domains, F(1) containing the extramembraneous catalytic core and F(0) containing the membrane proton channel, linked together by a central stalk and a peripheral stalk. During catalysis, ATP synthesis in the catalytic domain of F(1) is coupled via a rotary mechanism of the central stalk subunits to proton translocation. Its function is as follows. Component of the F(0) channel, it forms part of the peripheral stalk, linking F(1) to F(0). This is ATP synthase subunit b from Burkholderia ambifaria (strain MC40-6).